The sequence spans 535 residues: Probable cytochrome P450 12b2, mitochondrial (535 aa).

Cys-479 is a binding site for heme.

Belongs to the cytochrome P450 family. Requires heme as cofactor.

It localises to the mitochondrion membrane. The protein is Probable cytochrome P450 12b2, mitochondrial (Cyp12b2) of Drosophila melanogaster (Fruit fly).